Reading from the N-terminus, the 373-residue chain is P2Y purinoceptor 1 (373 aa).

Over M1–F51 the chain is Extracellular. Residues N11 and N27 are each glycosylated (N-linked (GlcNAc...) asparagine). Intrachain disulfides connect C42–C296 and C124–C202. An ADP-binding site is contributed by K46. A helical transmembrane segment spans residues Y52 to W74. Topologically, residues M75 to S87 are cytoplasmic. A helical membrane pass occupies residues V88 to F109. The Extracellular portion of the chain corresponds to Y110–K125. N-linked (GlcNAc...) asparagine glycosylation is present at N113. A helical transmembrane segment spans residues L126–A147. The Cytoplasmic segment spans residues H148–K166. Residues N167–F188 form a helical membrane-spanning segment. The Extracellular segment spans residues Y189 to Y214. N197 is a glycosylation site (N-linked (GlcNAc...) asparagine). Position 203–205 (Y203–T205) interacts with ADP. The helical transmembrane segment at F215 to Y237 threads the bilayer. Residues G238–Y260 lie on the Cytoplasmic side of the membrane. A helical membrane pass occupies residues L261–L284. Residues N283 to R287, Y303 to Y306, and R310 contribute to the ADP site. The Extracellular portion of the chain corresponds to R285 to Y303. A helical transmembrane segment spans residues A304 to F325. Residues L326–L373 lie on the Cytoplasmic side of the membrane.

This sequence belongs to the G-protein coupled receptor 1 family.

It localises to the cell membrane. With respect to regulation, ATP functions as antagonist and inhibits ADP-induced mobilization of Ca(2+). The P2Y1 receptor-specific antagonists A3P5PS, A3P5P and A2P5P inhibit downstream signaling mediated by mobilization of Ca(2+) from intracellular stores, and platelet shape changes in response to extracellular ADP. Functionally, receptor for extracellular adenine nucleotides such as ADP. In platelets, binding to ADP leads to mobilization of intracellular calcium ions via activation of phospholipase C, a change in platelet shape, and ultimately platelet aggregation. The sequence is that of P2Y purinoceptor 1 (P2RY1) from Homo sapiens (Human).